Reading from the N-terminus, the 296-residue chain is NAD kinase (296 aa).

Catalysis depends on aspartate 72, which acts as the Proton acceptor. Residues 72–73, 146–147, arginine 157, lysine 174, aspartate 176, 187–192, and glutamine 247 each bind NAD(+); these read DG, ND, and TAYALS.

It belongs to the NAD kinase family. A divalent metal cation serves as cofactor.

The protein resides in the cytoplasm. It catalyses the reaction NAD(+) + ATP = ADP + NADP(+) + H(+). Involved in the regulation of the intracellular balance of NAD and NADP, and is a key enzyme in the biosynthesis of NADP. Catalyzes specifically the phosphorylation on 2'-hydroxyl of the adenosine moiety of NAD to yield NADP. This is NAD kinase from Pseudomonas syringae pv. tomato (strain ATCC BAA-871 / DC3000).